Here is a 507-residue protein sequence, read N- to C-terminus: Cytochrome P450 monooxygenase cloA (507 aa).

A helical transmembrane segment spans residues 15–35 (WTWILLTTCIALISPLVLKGI). N-linked (GlcNAc...) asparagine glycosylation occurs at N247. Residue C450 coordinates heme.

Belongs to the cytochrome P450 family. Heme serves as cofactor.

Its subcellular location is the membrane. It functions in the pathway alkaloid biosynthesis; ergot alkaloid biosynthesis. Functionally, cytochrome P450 monooxygenase; part of the gene cluster that mediates the biosynthesis of fungal ergot alkaloid. DmaW catalyzes the first step of ergot alkaloid biosynthesis by condensing dimethylallyl diphosphate (DMAP) and tryptophan to form 4-dimethylallyl-L-tryptophan. The second step is catalyzed by the methyltransferase easF that methylates 4-dimethylallyl-L-tryptophan in the presence of S-adenosyl-L-methionine, resulting in the formation of 4-dimethylallyl-L-abrine. The catalase easC and the FAD-dependent oxidoreductase easE then transform 4-dimethylallyl-L-abrine to chanoclavine-I which is further oxidized by easD in the presence of NAD(+), resulting in the formation of chanoclavine-I aldehyde. Agroclavine dehydrogenase easG then mediates the conversion of chanoclavine-I aldehyde to agroclavine via a non-enzymatic adduct reaction: the substrate is an iminium intermediate that is formed spontaneously from chanoclavine-I aldehyde in the presence of glutathione. The presence of easA is not required to complete this reaction. Further conversion of agroclavine to paspalic acid is a two-step process involving oxidation of agroclavine to elymoclavine and of elymoclavine to paspalic acid, the second step being performed by the elymoclavine oxidase cloA. Paspalic acid is then further converted to D-lysergic acid. Ergopeptines are assembled from D-lysergic acid and three different amino acids by the D-lysergyl-peptide-synthetases composed each of a monomudular and a trimodular nonribosomal peptide synthetase subunit. LpsB and lpsC encode the monomodular subunits responsible for D-lysergic acid activation and incorporation into the ergopeptine backbone. LpsA1 and A2 subunits encode the trimodular nonribosomal peptide synthetase assembling the tripeptide portion of ergopeptines. LpsA1 is responsible for formation of the major ergopeptine, ergotamine, and lpsA2 for alpha-ergocryptine, the minor ergopeptine of the total alkaloid mixture elaborated by C.purpurea. D-lysergyl-tripeptides are assembled by the nonribosomal peptide synthetases and released as N-(D-lysergyl-aminoacyl)-lactams. Cyclolization of the D-lysergyl-tripeptides is performed by the Fe(2+)/2-ketoglutarate-dependent dioxygenase easH which introduces a hydroxyl group into N-(D-lysergyl-aminoacyl)-lactam at alpha-C of the aminoacyl residue followed by spontaneous condensation with the terminal lactam carbonyl group. This is Cytochrome P450 monooxygenase cloA from Claviceps purpurea (strain 20.1) (Ergot fungus).